The chain runs to 317 residues: Acetyl-coenzyme A carboxylase carboxyl transferase subunit alpha (317 aa).

In terms of domain architecture, CoA carboxyltransferase C-terminal spans 40-293 (LEKRSADALK…GDIIAASLRS (254 aa)).

Belongs to the AccA family. Acetyl-CoA carboxylase is a heterohexamer composed of biotin carboxyl carrier protein (AccB), biotin carboxylase (AccC) and two subunits each of ACCase subunit alpha (AccA) and ACCase subunit beta (AccD).

The protein localises to the cytoplasm. The catalysed reaction is N(6)-carboxybiotinyl-L-lysyl-[protein] + acetyl-CoA = N(6)-biotinyl-L-lysyl-[protein] + malonyl-CoA. Its pathway is lipid metabolism; malonyl-CoA biosynthesis; malonyl-CoA from acetyl-CoA: step 1/1. In terms of biological role, component of the acetyl coenzyme A carboxylase (ACC) complex. First, biotin carboxylase catalyzes the carboxylation of biotin on its carrier protein (BCCP) and then the CO(2) group is transferred by the carboxyltransferase to acetyl-CoA to form malonyl-CoA. The sequence is that of Acetyl-coenzyme A carboxylase carboxyl transferase subunit alpha from Brucella canis (strain ATCC 23365 / NCTC 10854 / RM-666).